A 123-amino-acid polypeptide reads, in one-letter code: Large ribosomal subunit protein bL12 (123 aa).

It belongs to the bacterial ribosomal protein bL12 family. As to quaternary structure, homodimer. Part of the ribosomal stalk of the 50S ribosomal subunit. Forms a multimeric L10(L12)X complex, where L10 forms an elongated spine to which 2 to 4 L12 dimers bind in a sequential fashion. Binds GTP-bound translation factors.

In terms of biological role, forms part of the ribosomal stalk which helps the ribosome interact with GTP-bound translation factors. Is thus essential for accurate translation. The polypeptide is Large ribosomal subunit protein bL12 (Laribacter hongkongensis (strain HLHK9)).